A 240-amino-acid polypeptide reads, in one-letter code: Insulin-like growth factor-binding protein 6 (240 aa).

The N-terminal stretch at 1-27 is a signal peptide; sequence MTPHRLLPPLLLLLALLLAASPGGALA. The 80-residue stretch at 28–107 folds into the IGFBP N-terminal domain; sequence RCPGCGQGVQ…LLGRGRCLPA (80 aa). 5 disulfides stabilise this stretch: Cys-29–Cys-32, Cys-40–Cys-44, Cys-57–Cys-63, Cys-71–Cys-84, and Cys-78–Cys-104. The interval 109–160 is disordered; the sequence is APAVAEENPKESKPQAGTARPQDVNRRDQQRNPGTSTTPSQPNSAGVQDTEM. Thr-126 carries an O-linked (HexNAc...) threonine glycan. A compositionally biased stretch (polar residues) spans 139–155; that stretch reads RNPGTSTTPSQPNSAGV. A glycan (O-linked (HexNAc...) serine) is linked at Ser-144. O-linked (HexNAc...) threonine glycans are attached at residues Thr-145 and Thr-146. Ser-152 carries O-linked (HexNAc...) serine glycosylation. Residues 160–234 enclose the Thyroglobulin type-1 domain; the sequence is MGPCRRHLDS…SPDGNGSSSC (75 aa). Disulfide bonds link Cys-163–Cys-190, Cys-201–Cys-212, and Cys-214–Cys-234. The interval 217-240 is disordered; that stretch reads RMGKSLPGSPDGNGSSSCPTGSSG. The segment covering 228-240 has biased composition (polar residues); the sequence is GNGSSSCPTGSSG.

As to quaternary structure, interacts (via C-terminal domain) with PHB2. Post-translationally, O-linked glycans consist of hexose (probably Gal), N-acetylhexosamine (probably GalNAc) and sialic acid residues. O-glycosylated with core 1 or possibly core 8 glycans. O-glycosylated on one site only in the region AA 143-168 in cerebrospinal fluid.

It localises to the secreted. Its function is as follows. IGF-binding proteins prolong the half-life of the IGFs and have been shown to either inhibit or stimulate the growth promoting effects of the IGFs on cell culture. They alter the interaction of IGFs with their cell surface receptors. Activates the MAPK signaling pathway and induces cell migration. This is Insulin-like growth factor-binding protein 6 from Homo sapiens (Human).